A 371-amino-acid chain; its full sequence is Alanine dehydrogenase (371 aa).

Substrate-binding residues include R15 and K75. The active-site Proton donor/acceptor is the H96. NAD(+) contacts are provided by residues S134, 178–179, D198, S220, 239–240, 267–270, R279, and 298–301; these read TA, VL, IAID, and VANM. D270 serves as the catalytic Proton donor/acceptor.

Belongs to the AlaDH/PNT family. As to quaternary structure, homohexamer. Trimer of dimers.

Its subcellular location is the cytoplasm. The enzyme catalyses L-alanine + NAD(+) + H2O = pyruvate + NH4(+) + NADH + H(+). It participates in amino-acid degradation; L-alanine degradation via dehydrogenase pathway; NH(3) and pyruvate from L-alanine: step 1/1. In terms of biological role, catalyzes the reversible reductive amination of pyruvate to L-alanine. Required for proficient utilization of D- or L-alanine as a nitrogen source. May be required for the adaptation from aerobic growth to anaerobic dormancy. It could be involved in the maintenance of the NAD pool during the shift to an anaerobic dormant state in which oxygen as a terminal electron acceptor becomes limiting. The polypeptide is Alanine dehydrogenase (Mycolicibacterium smegmatis (strain ATCC 700084 / mc(2)155) (Mycobacterium smegmatis)).